A 358-amino-acid polypeptide reads, in one-letter code: tRNA pseudouridine synthase B (358 aa).

Positions 1–50 (MTTPDAAIDSKISDSNGADKNKSAADDNAFNAPGRKRHHNNQPRRDKRDV) are disordered. The active-site Nucleophile is Asp87.

This sequence belongs to the pseudouridine synthase TruB family. Type 1 subfamily.

The enzyme catalyses uridine(55) in tRNA = pseudouridine(55) in tRNA. Responsible for synthesis of pseudouridine from uracil-55 in the psi GC loop of transfer RNAs. This chain is tRNA pseudouridine synthase B, found in Nitrobacter winogradskyi (strain ATCC 25391 / DSM 10237 / CIP 104748 / NCIMB 11846 / Nb-255).